A 180-amino-acid polypeptide reads, in one-letter code: ATP synthase subunit delta (180 aa).

It belongs to the ATPase delta chain family. F-type ATPases have 2 components, F(1) - the catalytic core - and F(0) - the membrane proton channel. F(1) has five subunits: alpha(3), beta(3), gamma(1), delta(1), epsilon(1). F(0) has three main subunits: a(1), b(2) and c(10-14). The alpha and beta chains form an alternating ring which encloses part of the gamma chain. F(1) is attached to F(0) by a central stalk formed by the gamma and epsilon chains, while a peripheral stalk is formed by the delta and b chains.

It localises to the cell membrane. Functionally, f(1)F(0) ATP synthase produces ATP from ADP in the presence of a proton or sodium gradient. F-type ATPases consist of two structural domains, F(1) containing the extramembraneous catalytic core and F(0) containing the membrane proton channel, linked together by a central stalk and a peripheral stalk. During catalysis, ATP synthesis in the catalytic domain of F(1) is coupled via a rotary mechanism of the central stalk subunits to proton translocation. This protein is part of the stalk that links CF(0) to CF(1). It either transmits conformational changes from CF(0) to CF(1) or is implicated in proton conduction. The sequence is that of ATP synthase subunit delta from Enterococcus hirae (strain ATCC 9790 / DSM 20160 / JCM 8729 / LMG 6399 / NBRC 3181 / NCIMB 6459 / NCDO 1258 / NCTC 12367 / WDCM 00089 / R).